The following is a 99-amino-acid chain: Mitochondrial import receptor subunit TOM9-2 (99 aa).

Residues 2–51 lie on the Cytoplasmic side of the membrane; it reads AAKRIGAGKSGGGDPNILARISNSEIVSQGRRAAGDAVEVSKKLLRSTGK. The helical transmembrane segment at 52–69 threads the bilayer; the sequence is AAWIAGTTFLILVVPLII. Residues 70–99 are Mitochondrial intermembrane-facing; the sequence is EMDREAQINEIELQQASLLGAPPSPMQRGL.

The protein belongs to the Tom22 family. Forms part of the preprotein translocase complex of the outer mitochondrial membrane (TOM complex) which consists of at least 6 different proteins (TOM5, TOM6, TOM7, TOM20, TOM22/TOM9 and TOM40). Expressed in young cotyledons, roots, flowers and leaves.

It is found in the mitochondrion outer membrane. Functionally, central component of the receptor complex responsible for the recognition and translocation of cytosolically synthesized mitochondrial preproteins. Together with TOM20 functions as the transit peptide receptor at the surface of the mitochondrion outer membrane and facilitates the movement of preproteins into the translocation pore. This chain is Mitochondrial import receptor subunit TOM9-2 (TOM9-2), found in Arabidopsis thaliana (Mouse-ear cress).